The sequence spans 77 residues: Acyl carrier protein (77 aa).

The Carrier domain occupies 1–76; the sequence is MAVFEDVRDV…DVVNYIEKLG (76 aa). The residue at position 36 (serine 36) is an O-(pantetheine 4'-phosphoryl)serine.

Belongs to the acyl carrier protein (ACP) family. In terms of processing, 4'-phosphopantetheine is transferred from CoA to a specific serine of apo-ACP by AcpS. This modification is essential for activity because fatty acids are bound in thioester linkage to the sulfhydryl of the prosthetic group.

It localises to the cytoplasm. The protein operates within lipid metabolism; fatty acid biosynthesis. Its function is as follows. Carrier of the growing fatty acid chain in fatty acid biosynthesis. The sequence is that of Acyl carrier protein from Campylobacter concisus (strain 13826).